Reading from the N-terminus, the 281-residue chain is Urease accessory protein UreD 2 (281 aa).

It belongs to the UreD family. In terms of assembly, ureD, UreF and UreG form a complex that acts as a GTP-hydrolysis-dependent molecular chaperone, activating the urease apoprotein by helping to assemble the nickel containing metallocenter of UreC. The UreE protein probably delivers the nickel.

The protein resides in the cytoplasm. Its function is as follows. Required for maturation of urease via the functional incorporation of the urease nickel metallocenter. The chain is Urease accessory protein UreD 2 from Pseudomonas syringae pv. syringae (strain B728a).